The sequence spans 312 residues: Plasma membrane-associated coenzyme Q6 reductase PGA3 (312 aa).

At 1–15 (MSKEDIEGTNILDEP) the chain is on the extracellular side. Residues 16 to 36 (VHGIYIPAALFVVGVAITTYM) form a helical membrane-spanning segment. Residues 37-39 (SGE) are Cytoplasmic-facing. The helical transmembrane segment at 40–60 (LKILWSLPILFMIIFVRAYSA) threads the bilayer. Residues 61 to 179 (YKRRRSLYPD…LNYEPNSSKH (119 aa)) lie on the Extracellular side of the membrane. The FAD-binding FR-type domain occupies 70-173 (DRWTSLELED…KGPIGTLNYE (104 aa)). FAD contacts are provided by residues 153–168 (AGLN…GPIG) and 179–211 (HLGI…KVSL). The chain crosses the membrane as a helical span at residues 180–200 (LGIVAGGSGITPVLQILNEII). At 201 to 312 (TVPEDLTKVS…SSGDDQVFVF (112 aa)) the chain is on the cytoplasmic side.

The protein belongs to the flavoprotein pyridine nucleotide cytochrome reductase family. FAD serves as cofactor.

It localises to the cell membrane. Its subcellular location is the endoplasmic reticulum membrane. The enzyme catalyses 2 Fe(III)-[cytochrome b5] + NADH = 2 Fe(II)-[cytochrome b5] + NAD(+) + H(+). Its activity is regulated as follows. Inhibited by diphenylene iodonium (DPI). Its function is as follows. NADH-dependent cytochrome b5 reductase that reduces coenzyme Q6 at the plasma membrane and mediates lifespan extension by calorie restriction by shifting fermentative to respiratory metabolism, probably through modulating the NAD(+)/NADH ratio. The sequence is that of Plasma membrane-associated coenzyme Q6 reductase PGA3 (PGA3) from Saccharomyces cerevisiae (strain ATCC 204508 / S288c) (Baker's yeast).